Here is a 207-residue protein sequence, read N- to C-terminus: Transcriptional regulatory protein RcsA (207 aa).

The HTH luxR-type domain maps to isoleucine 131–aspartate 196. A DNA-binding region (H-T-H motif) is located at residues threonine 155 to glycine 174.

The protein belongs to the RcsA family. As to quaternary structure, interacts with RcsB.

In terms of biological role, component of the Rcs signaling system, which controls transcription of numerous genes. Binds, with RcsB, to the RcsAB box to regulate expression of genes. This is Transcriptional regulatory protein RcsA from Salmonella typhimurium (strain LT2 / SGSC1412 / ATCC 700720).